A 654-amino-acid chain; its full sequence is Probable Xaa-Pro aminopeptidase P (654 aa).

Mn(2+) contacts are provided by D449, D460, E558, and E572.

It belongs to the peptidase M24B family. Mn(2+) is required as a cofactor.

The catalysed reaction is Release of any N-terminal amino acid, including proline, that is linked to proline, even from a dipeptide or tripeptide.. In terms of biological role, catalyzes the removal of a penultimate prolyl residue from the N-termini of peptides. This is Probable Xaa-Pro aminopeptidase P (ampp) from Aspergillus flavus (strain ATCC 200026 / FGSC A1120 / IAM 13836 / NRRL 3357 / JCM 12722 / SRRC 167).